We begin with the raw amino-acid sequence, 706 residues long: Serotransferrin (706 aa).

A signal peptide spans 1 to 19 (MRLAIRALLACAVLGLCLA). 2 consecutive Transferrin-like domains span residues 23–349 (VRWC…NLRE) and 363–691 (VKWC…NLRQ). 2 disulfide bridges follow: C26/C64 and C36/C55. R40 is subject to Dimethylated arginine. The Fe(3+) site is built by D79 and Y111. Disulfide bonds link C134/C215, C174/C190, C177/C198, C187/C200, and C248/C262. Residues T136, R140, A142, and G143 each contribute to the hydrogencarbonate site. Y209 lines the Fe(3+) pocket. H270 is a binding site for Fe(3+). Cystine bridges form between C360/C623, C366/C398, C376/C389, C423/C701, C441/C664, C474/C550, C498/C692, C508/C522, C519/C533, C590/C604, and C642/C647. S391 is subject to Phosphoserine. 2 residues coordinate Fe(3+): D413 and Y449. The hydrogencarbonate site is built by T476, R480, A482, and G483. An N-linked (GlcNAc...) asparagine glycan is attached at N515. Y544 contributes to the Fe(3+) binding site. Position 612 (H612) interacts with Fe(3+). A Phosphoserine modification is found at S693.

Belongs to the transferrin family. Monomer. Part of a complex composed of SLC40A1/ferroportin, TF/transferrin and HEPH/hephaestin that transfers iron from cells to transferrin. Expressed by the liver and secreted in plasma.

The protein resides in the secreted. Transferrins are iron binding transport proteins which can bind two Fe(3+) ions in association with the binding of an anion, usually bicarbonate. It is responsible for the transport of iron from sites of absorption and heme degradation to those of storage and utilization. Serum transferrin may also have a further role in stimulating cell proliferation. This chain is Serotransferrin (TF), found in Equus caballus (Horse).